We begin with the raw amino-acid sequence, 250 residues long: L-ascorbate peroxidase 1, cytosolic (250 aa).

Histidine 42 functions as the Proton acceptor in the catalytic mechanism. The tract at residues 113–137 is disordered; it reads VPFHPGREDKPAPPPEGRLPDATKG. Residue histidine 163 participates in heme b binding. K(+)-binding residues include threonine 164, threonine 180, asparagine 182, and aspartate 187.

It belongs to the peroxidase family. Ascorbate peroxidase subfamily. The cofactor is heme b. In terms of tissue distribution, expressed in roots, aerial vegetative parts and reproductive organs. Expressed in roots, leaves, stems and flowers.

The protein resides in the cytoplasm. It carries out the reaction L-ascorbate + H2O2 = L-dehydroascorbate + 2 H2O. Inhibited by p-chloromercuriphenylsulfonic acid (CMPSA). Its function is as follows. Plays a key role in hydrogen peroxide removal. The chain is L-ascorbate peroxidase 1, cytosolic from Oryza sativa subsp. japonica (Rice).